A 739-amino-acid chain; its full sequence is Sulfate transporter (739 aa).

The segment at 1–27 (MSSESKEQHNVSPRDSAEGNDSYPSGI) is disordered. Phosphoserine occurs at positions 12 and 16. A run of 2 helical transmembrane segments spans residues 112 to 132 (VMSG…YSLL) and 137 to 157 (PVYG…LGTS). Residues N199 and N205 are each glycosylated (N-linked (GlcNAc...) asparagine). The next 2 helical transmembrane spans lie at 219 to 239 (IMVG…MGFF) and 242 to 262 (GFVS…GASF). The N-linked (GlcNAc...) asparagine glycan is linked to N357. The next 4 helical transmembrane spans lie at 378 to 398 (LIPS…AITV), 420 to 440 (AIGF…SAAL), 455 to 475 (LSGV…APLF), and 524 to 544 (LLST…CVIL). The 152-residue stretch at 568 to 719 (AYKNLQIKPG…YSVYEAMAFA (152 aa)) folds into the STAS domain.

It belongs to the SLC26A/SulP transporter (TC 2.A.53) family. Post-translationally, N-glycosylated. In terms of tissue distribution, ubiquitously expressed.

It localises to the cell membrane. The protein localises to the apical cell membrane. The catalysed reaction is oxalate(in) + sulfate(out) = oxalate(out) + sulfate(in). It carries out the reaction sulfate(out) + 2 chloride(in) = sulfate(in) + 2 chloride(out). The enzyme catalyses oxalate(out) + 2 chloride(in) = oxalate(in) + 2 chloride(out). It catalyses the reaction bromide(in) + chloride(out) = bromide(out) + chloride(in). The catalysed reaction is nitrate(in) + chloride(out) = nitrate(out) + chloride(in). It carries out the reaction iodide(in) + chloride(out) = iodide(out) + chloride(in). With respect to regulation, an extracellular acidic pH inhibits chloride-sulfate and chloride-oxalate exchange activity whereas an intracellular acidic pH activates chloride-sulfate exchange with no effect on chloride-oxalate exchange activity. Sulfate transporter which mediates sulfate uptake into chondrocytes in order to maintain adequate sulfation of proteoglycans which is needed for cartilage development. Mediates electroneutral anion exchange of sulfate ions for oxalate ions and of sulfate and oxalate ions for chloride ions. Mediates exchange of sulfate and oxalate ions for hydroxyl ions and of chloride ions for bromide, iodide and nitrate ions. The coupling of sulfate transport to both hydroxyl and chloride ions likely serves to ensure transport at both acidic pH when most sulfate uptake is mediated by sulfate-hydroxide exchange and alkaline pH when most sulfate uptake is mediated by sulfate-chloride exchange. Essential for chondrocyte proliferation, differentiation and cell size expansion. The protein is Sulfate transporter (SLC26A2) of Homo sapiens (Human).